The chain runs to 382 residues: Sphingoid long-chain base transporter RSB1 (382 aa).

Residues 1–34 lie on the Extracellular side of the membrane; that stretch reads MSNATNNTLGSLLPQLEAAANSNSLYGGMVPNLR. Asn-3 and Asn-6 each carry an N-linked (GlcNAc...) asparagine glycan. A helical transmembrane segment spans residues 35–55; the sequence is FNITMIVIWGILLTIHVVQLL. The Cytoplasmic segment spans residues 56–57; that stretch reads MR. The chain crosses the membrane as a helical span at residues 58 to 78; sequence QYWFSIAFICTGILEVLGFIG. The Extracellular segment spans residues 79–90; it reads RTWSHSNVADMD. A helical membrane pass occupies residues 91-111; the sequence is AFLLNMICLTIAPVFTMGGIY. Residues 112–135 are Cytoplasmic-facing; it reads YQLAKLIEVYGHRFSLLPSPMAYS. A helical membrane pass occupies residues 136 to 156; it reads FIFICSDIVSLVVQAVGGGLC. Over 157–171 the chain is Extracellular; sequence GVAVTDGTSTTTGNH. The helical transmembrane segment at 172–192 threads the bilayer; the sequence is VFIAGLAIQVASMAIFLMLWF. The Cytoplasmic segment spans residues 193–241; it reads HFLFRIYISVRWEHINSRPISLSLLKISQTEVDYLYREKFHFLRLEPKR. A helical transmembrane segment spans residues 242–262; that stretch reads WVFHYFNLAMTVAVLTIFTRC. Over 263 to 281 the chain is Extracellular; sequence CYRLAELVVGWDGYLITHE. A helical transmembrane segment spans residues 282 to 302; sequence WYFIILDALMMAIATVTLTIF. The Cytoplasmic portion of the chain corresponds to 303–382; the sequence is HPGFAFKGRS…LFSSKKKAKL (80 aa).

It belongs to the lipid-translocating exporter (LTE) (TC 9.A.26.1) family.

Its subcellular location is the cell membrane. Its function is as follows. Catalyzes the ATP-dependent translocation of sphingoid long-chain bases (LCBs) from the cytoplasmic site toward the extracytoplasmic side of the membrane (flip-flop). Involved in the establishment of the functional lipid asymmetry of the plasma membrane. Regulates intracellular levels of LCBs, sphingolipid precursors that are growth inhibitory at increased levels. This is Sphingoid long-chain base transporter RSB1 (RSB1) from Saccharomyces cerevisiae (strain RM11-1a) (Baker's yeast).